The chain runs to 36 residues: Serine protease inhibitor 2 (36 aa).

The 36-residue stretch at 1–36 folds into the Pacifastin domain; it reads EISCEPGTTFQDKCNTCRCGKDGKSAAGCTLKACPQ. Disulfide bonds link Cys-4-Cys-19, Cys-14-Cys-34, and Cys-17-Cys-29.

The protein belongs to the protease inhibitor I19 family. In terms of tissue distribution, expressed in hemolymph.

The protein resides in the secreted. Probable serine protease inhibitor. The sequence is that of Serine protease inhibitor 2 from Melanoplus sanguinipes (Migratory grasshopper).